Reading from the N-terminus, the 362-residue chain is 3-dehydroquinate synthase (362 aa).

NAD(+) contacts are provided by residues 95–99, 119–120, K132, and K141; these read GVVGD and TT. Positions 174, 238, and 255 each coordinate Zn(2+).

This sequence belongs to the sugar phosphate cyclases superfamily. Dehydroquinate synthase family. Co(2+) serves as cofactor. Zn(2+) is required as a cofactor. The cofactor is NAD(+).

Its subcellular location is the cytoplasm. It catalyses the reaction 7-phospho-2-dehydro-3-deoxy-D-arabino-heptonate = 3-dehydroquinate + phosphate. The protein operates within metabolic intermediate biosynthesis; chorismate biosynthesis; chorismate from D-erythrose 4-phosphate and phosphoenolpyruvate: step 2/7. In terms of biological role, catalyzes the conversion of 3-deoxy-D-arabino-heptulosonate 7-phosphate (DAHP) to dehydroquinate (DHQ). The chain is 3-dehydroquinate synthase from Chlorobium luteolum (strain DSM 273 / BCRC 81028 / 2530) (Pelodictyon luteolum).